The following is a 166-amino-acid chain: SsrA-binding protein (166 aa).

Positions 143-166 (HDKREDDKRKQANRDMKSALARYR) are disordered. A compositionally biased stretch (basic and acidic residues) spans 144–159 (DKREDDKRKQANRDMK).

This sequence belongs to the SmpB family.

The protein resides in the cytoplasm. Its function is as follows. Required for rescue of stalled ribosomes mediated by trans-translation. Binds to transfer-messenger RNA (tmRNA), required for stable association of tmRNA with ribosomes. tmRNA and SmpB together mimic tRNA shape, replacing the anticodon stem-loop with SmpB. tmRNA is encoded by the ssrA gene; the 2 termini fold to resemble tRNA(Ala) and it encodes a 'tag peptide', a short internal open reading frame. During trans-translation Ala-aminoacylated tmRNA acts like a tRNA, entering the A-site of stalled ribosomes, displacing the stalled mRNA. The ribosome then switches to translate the ORF on the tmRNA; the nascent peptide is terminated with the 'tag peptide' encoded by the tmRNA and targeted for degradation. The ribosome is freed to recommence translation, which seems to be the essential function of trans-translation. The chain is SsrA-binding protein from Prochlorococcus marinus (strain MIT 9211).